Here is a 485-residue protein sequence, read N- to C-terminus: GTPase Der (485 aa).

2 consecutive EngA-type G domains span residues 3 to 167 and 176 to 349; these read PTIA…PEPE and PVFA…NAAM. Residues 9-16, 56-60, 119-122, 182-189, 229-233, and 294-297 contribute to the GTP site; these read GRPNVGKS, DTGGF, NKGE, DTAGV, and NKWD. A KH-like domain is found at 350–434; that stretch reads IKMPTPKITR…PLRIQYNVSE (85 aa). A disordered region spans residues 435–485; the sequence is NPYENAEDKPKKKPLRRVSLSNRIEKREGRKEEKNRFKKKTKVSVKKQFSK. Positions 457–469 are enriched in basic and acidic residues; it reads RIEKREGRKEEKN. Basic residues predominate over residues 470–485; that stretch reads RFKKKTKVSVKKQFSK.

Belongs to the TRAFAC class TrmE-Era-EngA-EngB-Septin-like GTPase superfamily. EngA (Der) GTPase family. Associates with the 50S ribosomal subunit.

In terms of biological role, GTPase that plays an essential role in the late steps of ribosome biogenesis. The protein is GTPase Der of Neisseria meningitidis serogroup C / serotype 2a (strain ATCC 700532 / DSM 15464 / FAM18).